The chain runs to 244 residues: Carboxy-S-adenosyl-L-methionine synthase (244 aa).

Residues tyrosine 38, 63 to 65, 88 to 89, 116 to 117, asparagine 131, and arginine 198 each bind S-adenosyl-L-methionine; these read GCS, DN, and DI.

It belongs to the class I-like SAM-binding methyltransferase superfamily. Cx-SAM synthase family. In terms of assembly, homodimer.

The enzyme catalyses prephenate + S-adenosyl-L-methionine = carboxy-S-adenosyl-L-methionine + 3-phenylpyruvate + H2O. In terms of biological role, catalyzes the conversion of S-adenosyl-L-methionine (SAM) to carboxy-S-adenosyl-L-methionine (Cx-SAM). This chain is Carboxy-S-adenosyl-L-methionine synthase, found in Haemophilus ducreyi (strain 35000HP / ATCC 700724).